A 201-amino-acid polypeptide reads, in one-letter code: Peptide deformylase (201 aa).

The disordered stretch occupies residues 1–34; it reads MSLNFAAMARQSERQASTVMVPKGEEQPESPKIH. The span at 23-32 shows a compositional bias: basic and acidic residues; that stretch reads KGEEQPESPK. 2 residues coordinate Fe cation: Cys121 and His163. The active site involves Glu164. Fe cation is bound at residue His167.

This sequence belongs to the polypeptide deformylase family. Fe(2+) serves as cofactor.

It carries out the reaction N-terminal N-formyl-L-methionyl-[peptide] + H2O = N-terminal L-methionyl-[peptide] + formate. Its function is as follows. Removes the formyl group from the N-terminal Met of newly synthesized proteins. Requires at least a dipeptide for an efficient rate of reaction. N-terminal L-methionine is a prerequisite for activity but the enzyme has broad specificity at other positions. The polypeptide is Peptide deformylase (Synechococcus sp. (strain RCC307)).